The sequence spans 490 residues: tRNA-guanine(15) transglycosylase (490 aa).

The active-site Nucleophile is the Asp-90. Positions 125 and 193 each coordinate substrate. 3 residues coordinate Zn(2+): Cys-276, Cys-278, and Cys-281.

The protein belongs to the archaeosine tRNA-ribosyltransferase family. The cofactor is Zn(2+).

It carries out the reaction guanosine(15) in tRNA + 7-cyano-7-deazaguanine = 7-cyano-7-carbaguanosine(15) in tRNA + guanine. It participates in tRNA modification; archaeosine-tRNA biosynthesis. Its function is as follows. Exchanges the guanine residue with 7-cyano-7-deazaguanine (preQ0) at position 15 in the dihydrouridine loop (D-loop) of archaeal tRNAs. This Methanosarcina barkeri (strain Fusaro / DSM 804) protein is tRNA-guanine(15) transglycosylase.